The sequence spans 332 residues: MSKARVYADVNVLRPKEYWDYEALTVQWGEQDDYEVVRKVGRGKYSEVFEGINVNNNEKCIIKILKPVKKKKIKREIKILQNLCGGPNIVKLLDIVRDQHSKTPSLIFEYVNNTDFKVLYPTLTDYDIRYYIYELLKALDYCHSQGIMHRDVKPHNVMIDHELRKLRLIDWGLAEFYHPGKEYNVRVASRYFKGPELLVDLQDYDYSLDMWSLGCMFAGMIFRKEPFFYGHDNHDQLVKIAKVLGTDGLNVYLNKYRIELDPQLEALVGRHSRKPWLKFMNADNQHLVSPEAIDFLDKLLRYDHQERLTALEAMTHPYFQQVRAAENSRTRA.

Residues 34 to 319 (YEVVRKVGRG…ALEAMTHPYF (286 aa)) form the Protein kinase domain. ATP-binding positions include 40-48 (VGRGKYSEV) and Lys-63. Asp-151 serves as the catalytic Proton acceptor.

This sequence belongs to the protein kinase superfamily. Ser/Thr protein kinase family. CK2 subfamily. As to quaternary structure, tetramer of two alpha and two beta chains (possible).

It carries out the reaction L-seryl-[protein] + ATP = O-phospho-L-seryl-[protein] + ADP + H(+). The catalysed reaction is L-threonyl-[protein] + ATP = O-phospho-L-threonyl-[protein] + ADP + H(+). Functionally, casein kinases are operationally defined by their preferential utilization of acidic proteins such as caseins as substrates. The alpha chain contains the catalytic site. This is Casein kinase II subunit alpha (ACK2) from Zea mays (Maize).